A 225-amino-acid polypeptide reads, in one-letter code: Methylthioribulose-1-phosphate dehydratase (225 aa).

Positions 106 and 108 each coordinate Zn(2+).

This sequence belongs to the aldolase class II family. MtnB subfamily. Zn(2+) serves as cofactor.

It catalyses the reaction 5-(methylsulfanyl)-D-ribulose 1-phosphate = 5-methylsulfanyl-2,3-dioxopentyl phosphate + H2O. The protein operates within amino-acid biosynthesis; L-methionine biosynthesis via salvage pathway; L-methionine from S-methyl-5-thio-alpha-D-ribose 1-phosphate: step 2/6. Catalyzes the dehydration of methylthioribulose-1-phosphate (MTRu-1-P) into 2,3-diketo-5-methylthiopentyl-1-phosphate (DK-MTP-1-P). In Xanthomonas oryzae pv. oryzae (strain MAFF 311018), this protein is Methylthioribulose-1-phosphate dehydratase.